Consider the following 98-residue polypeptide: Small ribosomal subunit protein uS19 (98 aa).

The interval 77-98 (TRTYRGHAGGKAEKGGAAPKRK) is disordered.

This sequence belongs to the universal ribosomal protein uS19 family.

Functionally, protein S19 forms a complex with S13 that binds strongly to the 16S ribosomal RNA. The sequence is that of Small ribosomal subunit protein uS19 from Chlorobium phaeovibrioides (strain DSM 265 / 1930) (Prosthecochloris vibrioformis (strain DSM 265)).